Consider the following 80-residue polypeptide: U-actitoxin-Avd9a (80 aa).

The N-terminal stretch at 1-20 (MNLKVLAVFVLCAILVVVTA) is a signal peptide. The propeptide occupies 21 to 39 (ERRGTETGVYKKDTLQDLI). Residues 45–80 (CIDRFPTGTCKQVKKGGSCKNSDKYRMNCRKTCGLC) form the ShKT domain. 3 disulfides stabilise this stretch: cysteine 45–cysteine 80, cysteine 54–cysteine 73, and cysteine 63–cysteine 77. Residues 68-69 (KY) form a crucial for binding to potassium channels region.

The protein belongs to the sea anemone type 1 potassium channel toxin family. Type 1b subfamily.

The protein resides in the secreted. It localises to the nematocyst. Its function is as follows. Inhibits voltage-gated potassium channels (Kv1/KCNA). The chain is U-actitoxin-Avd9a from Anemonia viridis (Snakelocks anemone).